The chain runs to 331 residues: Phosphate acyltransferase (331 aa).

The protein belongs to the PlsX family. As to quaternary structure, homodimer. Probably interacts with PlsY.

Its subcellular location is the cytoplasm. It carries out the reaction a fatty acyl-[ACP] + phosphate = an acyl phosphate + holo-[ACP]. The protein operates within lipid metabolism; phospholipid metabolism. In terms of biological role, catalyzes the reversible formation of acyl-phosphate (acyl-PO(4)) from acyl-[acyl-carrier-protein] (acyl-ACP). This enzyme utilizes acyl-ACP as fatty acyl donor, but not acyl-CoA. This Lactococcus lactis subsp. cremoris (strain SK11) protein is Phosphate acyltransferase.